Consider the following 140-residue polypeptide: ATP synthase epsilon chain (140 aa).

The protein belongs to the ATPase epsilon chain family. As to quaternary structure, F-type ATPases have 2 components, CF(1) - the catalytic core - and CF(0) - the membrane proton channel. CF(1) has five subunits: alpha(3), beta(3), gamma(1), delta(1), epsilon(1). CF(0) has three main subunits: a, b and c.

The protein localises to the cell inner membrane. Functionally, produces ATP from ADP in the presence of a proton gradient across the membrane. This Saccharophagus degradans (strain 2-40 / ATCC 43961 / DSM 17024) protein is ATP synthase epsilon chain.